The primary structure comprises 164 residues: C-phycoerythrin class 1 subunit alpha (164 aa).

2 residues coordinate (2R,3E)-phycoerythrobilin: C82 and C139.

This sequence belongs to the phycobiliprotein family. In terms of assembly, heterodimer of an alpha and a beta chain. In terms of processing, contains one covalently linked bilin chromophore.

It localises to the cellular thylakoid membrane. Its function is as follows. Light-harvesting photosynthetic bile pigment-protein from the phycobiliprotein complex. This Synechococcus sp. (strain WH7803) protein is C-phycoerythrin class 1 subunit alpha (cpeA).